The primary structure comprises 704 residues: Polyribonucleotide nucleotidyltransferase (704 aa).

Mg(2+) contacts are provided by D486 and D492. Positions 553–612 (PKIVIVKINPDKIRDVIGPGGKQINKIIEETGVKIDTEQDGTIYISSANEEMNARAKQII) constitute a KH domain. The 69-residue stretch at 622 to 690 (GEYYLSTVKR…KQGRVNLSRK (69 aa)) folds into the S1 motif domain.

It belongs to the polyribonucleotide nucleotidyltransferase family. It depends on Mg(2+) as a cofactor.

The protein resides in the cytoplasm. The enzyme catalyses RNA(n+1) + phosphate = RNA(n) + a ribonucleoside 5'-diphosphate. Functionally, involved in mRNA degradation. Catalyzes the phosphorolysis of single-stranded polyribonucleotides processively in the 3'- to 5'-direction. The sequence is that of Polyribonucleotide nucleotidyltransferase from Lysinibacillus sphaericus (strain C3-41).